The chain runs to 146 residues: uncharacterized protein (146 aa).

Positions 31–119 constitute a Toprim domain; sequence EKVMIVEGKS…RAYKEVAAAP (89 aa).

This is an uncharacterized protein from Bacillus subtilis (strain 168).